The primary structure comprises 153 residues: Aspartate carbamoyltransferase regulatory chain (153 aa).

Residues cysteine 109, cysteine 114, cysteine 138, and cysteine 141 each coordinate Zn(2+).

Belongs to the PyrI family. In terms of assembly, contains catalytic and regulatory chains. Zn(2+) serves as cofactor.

Involved in allosteric regulation of aspartate carbamoyltransferase. In Shigella flexneri serotype 5b (strain 8401), this protein is Aspartate carbamoyltransferase regulatory chain.